A 390-amino-acid chain; its full sequence is Manganese peroxidase 2 (390 aa).

Positions 1–23 (MAFNFAAILAFVSLAAVTSAAPS) are cleaved as a signal peptide. Disulfide bonds link Cys-27/Cys-39, Cys-38/Cys-313, Cys-57/Cys-141, Cys-277/Cys-343, and Cys-365/Cys-372. Mn(2+) is bound by residues Glu-59 and Glu-63. His-70 (proton acceptor) is an active-site residue. Asp-71, Gly-86, Asp-88, and Ser-90 together coordinate Ca(2+). The N-linked (GlcNAc...) asparagine glycan is linked to Asn-155. A heme b-binding site is contributed by His-197. Ser-198 serves as a coordination point for Ca(2+). Residue Asp-203 coordinates Mn(2+). Residues Asp-215, Thr-217, and Asp-222 each contribute to the Ca(2+) site. N-linked (GlcNAc...) asparagine glycosylation occurs at Asn-241.

This sequence belongs to the peroxidase family. Ligninase subfamily. The cofactor is heme b. Ca(2+) serves as cofactor.

It is found in the secreted. The catalysed reaction is 2 Mn(2+) + H2O2 + 2 H(+) = 2 Mn(3+) + 2 H2O. Catalyzes the oxidation of Mn(2+) to Mn(3+). The latter, acting as a diffusible redox mediator, is capable of oxidizing a variety of lignin compounds. The protein is Manganese peroxidase 2 (mnp2) of Phlebia radiata (White-rot fungus).